The following is a 600-amino-acid chain: Long-chain-fatty-acid--CoA ligase FadD15 (600 aa).

Belongs to the ATP-dependent AMP-binding enzyme family.

It catalyses the reaction a long-chain fatty acid + ATP + CoA = a long-chain fatty acyl-CoA + AMP + diphosphate. The enzyme catalyses dodecanoate + ATP + CoA = dodecanoyl-CoA + AMP + diphosphate. The catalysed reaction is hexadecanoate + ATP + CoA = hexadecanoyl-CoA + AMP + diphosphate. It functions in the pathway lipid metabolism; fatty acid biosynthesis. Functionally, catalyzes the activation of long-chain fatty acids as acyl-coenzyme A (acyl-CoA), which are then transferred to the multifunctional polyketide synthase (PKS) type III for further chain extension. This chain is Long-chain-fatty-acid--CoA ligase FadD15 (fadD15), found in Mycobacterium tuberculosis (strain ATCC 25618 / H37Rv).